Consider the following 431-residue polypeptide: uncharacterized protein (431 aa).

2 4Fe-4S ferredoxin-type domains span residues 336 to 367 (VRPV…NGLD) and 362 to 391 (IDNG…MDTG).

This is an uncharacterized protein from Methanothermobacter thermautotrophicus (strain ATCC 29096 / DSM 1053 / JCM 10044 / NBRC 100330 / Delta H) (Methanobacterium thermoautotrophicum).